A 405-amino-acid chain; its full sequence is Arginine biosynthesis bifunctional protein ArgJ, mitochondrial (405 aa).

Substrate contacts are provided by threonine 174, lysine 200, threonine 211, and glutamate 300. Threonine 211 serves as the catalytic Nucleophile.

Belongs to the ArgJ family. As to quaternary structure, heterodimer of an alpha and a beta chain. Post-translationally, the alpha and beta chains are autoproteolytically processed from a single precursor protein within the mitochondrion.

It is found in the mitochondrion matrix. The enzyme catalyses N(2)-acetyl-L-ornithine + L-glutamate = N-acetyl-L-glutamate + L-ornithine. It carries out the reaction L-glutamate + acetyl-CoA = N-acetyl-L-glutamate + CoA + H(+). Its pathway is amino-acid biosynthesis; L-arginine biosynthesis; L-ornithine and N-acetyl-L-glutamate from L-glutamate and N(2)-acetyl-L-ornithine (cyclic): step 1/1. It functions in the pathway amino-acid biosynthesis; L-arginine biosynthesis; N(2)-acetyl-L-ornithine from L-glutamate: step 1/4. Functionally, catalyzes two activities which are involved in the cyclic version of arginine biosynthesis: the synthesis of acetylglutamate from glutamate and acetyl-CoA, and of ornithine by transacetylation between acetylornithine and glutamate. The sequence is that of Arginine biosynthesis bifunctional protein ArgJ, mitochondrial from Candida tropicalis (strain ATCC MYA-3404 / T1) (Yeast).